The chain runs to 107 residues: Cytochrome c oxidase assembly protein COX16 homolog, mitochondrial (107 aa).

Residues 1-14 (MFGYAVRRALRKSK) lie on the Mitochondrial matrix side of the membrane. The helical transmembrane segment at 15–37 (TLRYGVPMLLLIVGGSFGLREFS) threads the bilayer. The Mitochondrial intermembrane portion of the chain corresponds to 38–107 (QIRYDAVKIK…PEILKTNKTT (70 aa)). Residues 80–107 (NIRGPRPWEDPDLLQGRNPEILKTNKTT) form a disordered region.

This sequence belongs to the COX16 family. In terms of assembly, associates with the MITRAC complex. Interacts with MT-CO2/COX; specifically interacts with newly synthesized MT-CO2/COX. Interacts with SCO1, SCO2 and COA6.

Its subcellular location is the mitochondrion inner membrane. Required for the assembly of the mitochondrial respiratory chain complex IV (CIV), also known as cytochrome c oxidase. Promotes the insertion of copper into the active site of cytochrome c oxidase subunit II (MT-CO2/COX2). Interacts specifically with newly synthesized MT-CO2/COX and its copper center-forming metallochaperones SCO1, SCO2 and COA6. Probably facilitates MT-CO2/COX2 association with the MITRAC assembly intermediate containing MT-CO1/COX1, thereby participating in merging the MT-CO1/COX1 and MT-CO2/COX2 assembly lines. This Bos taurus (Bovine) protein is Cytochrome c oxidase assembly protein COX16 homolog, mitochondrial.